We begin with the raw amino-acid sequence, 138 residues long: HTH-type transcriptional regulator CymR (138 aa).

In terms of domain architecture, HTH rrf2-type spans 2–125 (KISTKGRYGL…DSTTLEDLAS (124 aa)). The segment at residues 28-51 (LKSIAQTNNLSEHYLEQLVSPLRN) is a DNA-binding region (H-T-H motif).

As to quaternary structure, homodimer. Forms homotetramers at higher concentrations of protein. Forms CymR(2):CysK(2) or CymR(4):CysK(4) complexes in the absence of O-acetylserine.

In terms of biological role, master repressor of cysteine metabolism in B.subtilis. Controls the expression of genes involved either in cysteine synthesis from sulfide (cysK), sulfonates (ssu), or methionine (mccAB) or in cystine uptake (tcyP). Activity of CymR is positively regulated by CysK in response to cysteine availability. When cysteine is present, the pool of O-acetylserine (OAS) is low, which leads to the formation of a CymR-CysK complex and transcriptional repression of the CymR regulon occurs. In the absence of cysteine, the OAS pool is high and the CymR-CysK complex is mostly dissociated, leading to a faster dissociation of CymR from its DNA targets and the lifting of CymR-dependent repression. The chain is HTH-type transcriptional regulator CymR (cymR) from Bacillus subtilis (strain 168).